The primary structure comprises 284 residues: Phosphatidylglycerol--prolipoprotein diacylglyceryl transferase (284 aa).

7 helical membrane-spanning segments follow: residues isoleucine 14–isoleucine 34, tyrosine 62–tyrosine 82, phenylalanine 106–tyrosine 126, leucine 136–isoleucine 156, proline 190–alanine 210, glycine 218–tyrosine 238, and leucine 252–tyrosine 272. Residue arginine 155 coordinates a 1,2-diacyl-sn-glycero-3-phospho-(1'-sn-glycerol).

Belongs to the Lgt family.

It is found in the cell inner membrane. It catalyses the reaction L-cysteinyl-[prolipoprotein] + a 1,2-diacyl-sn-glycero-3-phospho-(1'-sn-glycerol) = an S-1,2-diacyl-sn-glyceryl-L-cysteinyl-[prolipoprotein] + sn-glycerol 1-phosphate + H(+). Its pathway is protein modification; lipoprotein biosynthesis (diacylglyceryl transfer). Catalyzes the transfer of the diacylglyceryl group from phosphatidylglycerol to the sulfhydryl group of the N-terminal cysteine of a prolipoprotein, the first step in the formation of mature lipoproteins. The chain is Phosphatidylglycerol--prolipoprotein diacylglyceryl transferase from Helicobacter pylori (strain Shi470).